The primary structure comprises 1004 residues: Ephrin type-B receptor 2 (1004 aa).

The signal sequence occupies residues 1–19 (MGPLWFCCLPLALLPLLAA). Residues 20 to 544 (VEETLMDSTT…QTSVQEKLPL (525 aa)) lie on the Extracellular side of the membrane. The Eph LBD domain occupies 21-203 (EETLMDSTTA…FYRKCPRVIQ (183 aa)). Intrachain disulfides connect C63–C185 and C98–C108. N-linked (GlcNAc...) asparagine glycans are attached at residues N266, N337, N429, N478, and N483. Fibronectin type-III domains follow at residues 325-435 (IPSA…TNQA) and 436-531 (APSA…TMTE). The chain crosses the membrane as a helical span at residues 545 to 565 (IIGSSAAGLVFLIAVVVIIIV). Residues 566 to 1004 (CNRRRGFERA…QMNQIQSVEV (439 aa)) lie on the Cytoplasmic side of the membrane. Residues 639–902 (VKIEQVIGAG…QIVNTLDKMI (264 aa)) form the Protein kinase domain. ATP is bound by residues 645–653 (IGAGEFGEV) and K671. Catalysis depends on D764, which acts as the Proton acceptor. The SAM domain occupies 931-995 (TSFNTVDEWL…LNSIQVMRAQ (65 aa)). Residues 1002–1004 (VEV) carry the PDZ-binding motif.

Belongs to the protein kinase superfamily. Tyr protein kinase family. Ephrin receptor subfamily. In terms of assembly, heterotetramer upon binding of the ligand. The heterotetramer is composed of an ephrin dimer and a receptor dimer. Oligomerization is probably required to induce biological responses. Post-translationally, ligand binding induces cleavage by matrix metalloproteinases (MMPs) such as MMP7/MMP9, producing an EphB2/N-terminal fragment (NTF) and a C-terminal long fragment (EphB2-LF). EphB2-LF is further cleaved by MMPs, producing EphB2/CTF1 which is further cleaved by the PS1/gamma-secretase producing EphB2/CTF2. In terms of tissue distribution, wide tissue distribution throughout development and sustained expression in adult brain. The longer form (CEK5+) is specifically expressed in the central nervous system.

It localises to the cell membrane. The protein resides in the cell projection. Its subcellular location is the axon. It is found in the dendrite. The catalysed reaction is L-tyrosyl-[protein] + ATP = O-phospho-L-tyrosyl-[protein] + ADP + H(+). Functionally, receptor tyrosine kinase which binds promiscuously transmembrane ephrin-B family ligands residing on adjacent cells, leading to contact-dependent bidirectional signaling into neighboring cells. The signaling pathway downstream of the receptor is referred to as forward signaling while the signaling pathway downstream of the ephrin ligand is referred to as reverse signaling. Functions in axon guidance during development. In addition to axon guidance, also regulates dendritic spines development and maturation and stimulates the formation of excitatory synapses. This chain is Ephrin type-B receptor 2 (EPHB2), found in Gallus gallus (Chicken).